Here is a 405-residue protein sequence, read N- to C-terminus: Phosphoglycerate kinase (405 aa).

Residues 21-23 (DFN), Arg-36, 59-62 (HLGR), Arg-119, and Arg-161 each bind substrate. ATP-binding positions include Lys-212, Gly-301, Glu-332, and 361 to 364 (GGDS).

The protein belongs to the phosphoglycerate kinase family. In terms of assembly, monomer.

It is found in the cytoplasm. The catalysed reaction is (2R)-3-phosphoglycerate + ATP = (2R)-3-phospho-glyceroyl phosphate + ADP. It participates in carbohydrate degradation; glycolysis; pyruvate from D-glyceraldehyde 3-phosphate: step 2/5. This chain is Phosphoglycerate kinase, found in Leuconostoc citreum (strain KM20).